The chain runs to 503 residues: Nuclear respiratory factor 1 (503 aa).

Positions 1 to 78 (MEEHGVTQTE…AHLAAAGPVG (78 aa)) are dimerization. A disordered region spans residues 36–57 (SMLSADEDSPSSPEDTSYDDSD). 5 positions are modified to phosphoserine; by CK2: S39, S44, S46, S47, and S52. The Nuclear localization signal motif lies at 88-116 (GKKRKRPHVFESNPSIRKRQQTRLLRKLR). Residues 109–305 (TRLLRKLRAT…SIAHLVPSQT (197 aa)) mediate DNA binding. A Glycyl lysine isopeptide (Lys-Gly) (interchain with G-Cter in SUMO2) cross-link involves residue K139. Residues 301 to 476 (VPSQTVVQTF…AQGNGPVQVA (176 aa)) are required for transcriptional activation.

Belongs to the NRF1/Ewg family. Homodimer. Binds DNA as a dimer. Interacts with PPRC1. In terms of processing, phosphorylation enhances DNA binding. In terms of tissue distribution, ubiquitously expressed with strongest expression in skeletal muscle.

The protein resides in the nucleus. In terms of biological role, transcription factor that activates the expression of the EIF2S1 (EIF2-alpha) gene. Links the transcriptional modulation of key metabolic genes to cellular growth and development. Implicated in the control of nuclear genes required for respiration, heme biosynthesis, and mitochondrial DNA transcription and replication. This is Nuclear respiratory factor 1 (NRF1) from Homo sapiens (Human).